A 200-amino-acid chain; its full sequence is NADH-quinone oxidoreductase subunit C (200 aa).

This sequence belongs to the complex I 30 kDa subunit family. As to quaternary structure, NDH-1 is composed of 14 different subunits. Subunits NuoB, C, D, E, F, and G constitute the peripheral sector of the complex.

It localises to the cell inner membrane. The catalysed reaction is a quinone + NADH + 5 H(+)(in) = a quinol + NAD(+) + 4 H(+)(out). In terms of biological role, NDH-1 shuttles electrons from NADH, via FMN and iron-sulfur (Fe-S) centers, to quinones in the respiratory chain. The immediate electron acceptor for the enzyme in this species is believed to be ubiquinone. Couples the redox reaction to proton translocation (for every two electrons transferred, four hydrogen ions are translocated across the cytoplasmic membrane), and thus conserves the redox energy in a proton gradient. The chain is NADH-quinone oxidoreductase subunit C from Rhizobium rhizogenes (strain K84 / ATCC BAA-868) (Agrobacterium radiobacter).